The chain runs to 595 residues: 2-succinyl-5-enolpyruvyl-6-hydroxy-3-cyclohexene-1-carboxylate synthase (595 aa).

The protein belongs to the TPP enzyme family. MenD subfamily. As to quaternary structure, homodimer. Mg(2+) is required as a cofactor. It depends on Mn(2+) as a cofactor. The cofactor is thiamine diphosphate.

The enzyme catalyses isochorismate + 2-oxoglutarate + H(+) = 5-enolpyruvoyl-6-hydroxy-2-succinyl-cyclohex-3-ene-1-carboxylate + CO2. It functions in the pathway quinol/quinone metabolism; 1,4-dihydroxy-2-naphthoate biosynthesis; 1,4-dihydroxy-2-naphthoate from chorismate: step 2/7. The protein operates within cofactor biosynthesis; phylloquinone biosynthesis. Functionally, catalyzes the thiamine diphosphate-dependent decarboxylation of 2-oxoglutarate and the subsequent addition of the resulting succinic semialdehyde-thiamine pyrophosphate anion to isochorismate to yield 2-succinyl-5-enolpyruvyl-6-hydroxy-3-cyclohexene-1-carboxylate (SEPHCHC). The chain is 2-succinyl-5-enolpyruvyl-6-hydroxy-3-cyclohexene-1-carboxylate synthase from Synechocystis sp. (strain ATCC 27184 / PCC 6803 / Kazusa).